Here is a 468-residue protein sequence, read N- to C-terminus: Immunoglobulin superfamily member 21 (468 aa).

An N-terminal signal peptide occupies residues 1 to 24 (MQAAPSLRRASCLLLAAILDLARG). An Ig-like 1 domain is found at 25-132 (YLTVNIEPLP…RATREKVVLA (108 aa)). Cysteine 46 and cysteine 116 are joined by a disulfide. 3 N-linked (GlcNAc...) asparagine glycosylation sites follow: asparagine 82, asparagine 165, and asparagine 407. The Ig-like 2 domain maps to 344-429 (PKIMMTPSRA…GSTDTHTRLI (86 aa)).

Interacts (Ig-like 1 domain) with NRXN2 (via Laminin G-like 1 domain) in a trans-interaction manner. In terms of tissue distribution, expressed in brain (at protein levels). Highly expressed in the pyramidal cell layer of the dorsal and ventral hippocampal CA1 and CA3 regions, layers 5 and 6 of the cortex, the thalamus and the pons and weakly expressed in the cerebellum. Expressed in neurons but not in glia.

The protein resides in the postsynaptic cell membrane. In terms of biological role, involved in synaptic inhibition in the brain. Selectively regulates inhibitory presynaptic differentiation through interacting with presynaptic NRXN2. This is Immunoglobulin superfamily member 21 (Igsf21) from Mus musculus (Mouse).